The sequence spans 390 residues: Homeobox protein Hox-B2a (390 aa).

Disordered stretches follow at residues 40 to 73 (STAI…TASN), 81 to 100 (TAPP…GAPL), 108 to 155 (KEKK…LDNV), and 211 to 338 (MKHK…SLPD). Over residues 52 to 73 (PSLSPCTGNQARPRSQKRTASN) the composition is skewed to polar residues. An Antp-type hexapeptide motif is present at residues 103–108 (EFPWMK). Residues 118-135 (KPGATAAAAAASPSQASS) show a composition bias toward low complexity. The homeobox DNA-binding region spans 158-217 (SRRLRTAYTNTQLLELEKEFHFNKYLCRPRRVEIAALLDLTERQVKVWFQNRRMKHKRQT). The span at 244 to 262 (SSQSLEVSGSGSAAPSESE) shows a compositional bias: low complexity. Positions 263–290 (TCPTTAAYTNSSDKSQPTPEEGQASQPE) are enriched in polar residues.

The protein belongs to the Antp homeobox family. Proboscipedia subfamily.

It localises to the nucleus. Its function is as follows. Sequence-specific transcription factor which is part of a developmental regulatory system that provides cells with specific positional identities on the anterior-posterior axis. Plays an important role in the patterning of hindbrain and pharyngeal arches. The chain is Homeobox protein Hox-B2a (hoxb2a) from Danio rerio (Zebrafish).